Here is a 72-residue protein sequence, read N- to C-terminus: MSKQDVIEVEGTVIEPLPNAMFRVELQNGHKVLAHVSGKIRMNFIRILAGDRVMVELSPYDLTRGRIVYRYK.

The S1-like domain maps to 1–72 (MSKQDVIEVE…TRGRIVYRYK (72 aa)).

This sequence belongs to the IF-1 family. In terms of assembly, component of the 30S ribosomal translation pre-initiation complex which assembles on the 30S ribosome in the order IF-2 and IF-3, IF-1 and N-formylmethionyl-tRNA(fMet); mRNA recruitment can occur at any time during PIC assembly.

It is found in the cytoplasm. Its function is as follows. One of the essential components for the initiation of protein synthesis. Stabilizes the binding of IF-2 and IF-3 on the 30S subunit to which N-formylmethionyl-tRNA(fMet) subsequently binds. Helps modulate mRNA selection, yielding the 30S pre-initiation complex (PIC). Upon addition of the 50S ribosomal subunit IF-1, IF-2 and IF-3 are released leaving the mature 70S translation initiation complex. In Pelotomaculum thermopropionicum (strain DSM 13744 / JCM 10971 / SI), this protein is Translation initiation factor IF-1.